Reading from the N-terminus, the 40-residue chain is Photosystem II reaction center protein J (40 aa).

The helical transmembrane segment at 8-28 (IPLWIVGTVTGILVIGLIGVF) threads the bilayer.

Belongs to the PsbJ family. As to quaternary structure, PSII is composed of 1 copy each of membrane proteins PsbA, PsbB, PsbC, PsbD, PsbE, PsbF, PsbH, PsbI, PsbJ, PsbK, PsbL, PsbM, PsbT, PsbX, PsbY, PsbZ, Psb30/Ycf12, at least 3 peripheral proteins of the oxygen-evolving complex and a large number of cofactors. It forms dimeric complexes.

Its subcellular location is the plastid. It localises to the chloroplast thylakoid membrane. Its function is as follows. One of the components of the core complex of photosystem II (PSII). PSII is a light-driven water:plastoquinone oxidoreductase that uses light energy to abstract electrons from H(2)O, generating O(2) and a proton gradient subsequently used for ATP formation. It consists of a core antenna complex that captures photons, and an electron transfer chain that converts photonic excitation into a charge separation. This Coffea arabica (Arabian coffee) protein is Photosystem II reaction center protein J.